The following is a 102-amino-acid chain: Large ribosomal subunit protein P1 (102 aa).

Residues 69–91 form a disordered region; that stretch reads APAAAAEEKKEEEKKEEKKEEDT. Positions 74–90 are enriched in basic and acidic residues; it reads AEEKKEEEKKEEKKEED.

This sequence belongs to the eukaryotic ribosomal protein P1/P2 family. As to quaternary structure, part of the 50S ribosomal subunit. Homodimer, it forms part of the ribosomal stalk which helps the ribosome interact with GTP-bound translation factors. Forms a heptameric uL10/P0(P1)2(P1)2(P1)2 complex, where uL10/P0 forms an elongated spine to which the P1 dimers bind in a sequential fashion.

Forms part of the ribosomal stalk, playing a central role in the interaction of the ribosome with GTP-bound translation factors. This is Large ribosomal subunit protein P1 from Methanocaldococcus jannaschii (strain ATCC 43067 / DSM 2661 / JAL-1 / JCM 10045 / NBRC 100440) (Methanococcus jannaschii).